The following is a 270-amino-acid chain: Formamidopyrimidine-DNA glycosylase (270 aa).

The active-site Schiff-base intermediate with DNA is Pro2. The Proton donor role is filled by Glu3. The active-site Proton donor; for beta-elimination activity is the Lys56. Residues His89, Arg107, and Arg151 each coordinate DNA. The FPG-type zinc finger occupies 236–270 (TVYGRAGEPCRVCATPIRLLRQGQRSTYYCPNCQK). The Proton donor; for delta-elimination activity role is filled by Arg260.

This sequence belongs to the FPG family. In terms of assembly, monomer. Requires Zn(2+) as cofactor.

It catalyses the reaction Hydrolysis of DNA containing ring-opened 7-methylguanine residues, releasing 2,6-diamino-4-hydroxy-5-(N-methyl)formamidopyrimidine.. It carries out the reaction 2'-deoxyribonucleotide-(2'-deoxyribose 5'-phosphate)-2'-deoxyribonucleotide-DNA = a 3'-end 2'-deoxyribonucleotide-(2,3-dehydro-2,3-deoxyribose 5'-phosphate)-DNA + a 5'-end 5'-phospho-2'-deoxyribonucleoside-DNA + H(+). In terms of biological role, involved in base excision repair of DNA damaged by oxidation or by mutagenic agents. Acts as a DNA glycosylase that recognizes and removes damaged bases. Has a preference for oxidized purines, such as 7,8-dihydro-8-oxoguanine (8-oxoG). Has AP (apurinic/apyrimidinic) lyase activity and introduces nicks in the DNA strand. Cleaves the DNA backbone by beta-delta elimination to generate a single-strand break at the site of the removed base with both 3'- and 5'-phosphates. In Variovorax paradoxus (strain S110), this protein is Formamidopyrimidine-DNA glycosylase.